The sequence spans 185 residues: Elongation factor P (185 aa).

The protein belongs to the elongation factor P family.

Its subcellular location is the cytoplasm. It participates in protein biosynthesis; polypeptide chain elongation. Functionally, involved in peptide bond synthesis. Stimulates efficient translation and peptide-bond synthesis on native or reconstituted 70S ribosomes in vitro. Probably functions indirectly by altering the affinity of the ribosome for aminoacyl-tRNA, thus increasing their reactivity as acceptors for peptidyl transferase. The protein is Elongation factor P (efp) of Thermotoga maritima (strain ATCC 43589 / DSM 3109 / JCM 10099 / NBRC 100826 / MSB8).